Here is a 94-residue protein sequence, read N- to C-terminus: Co-chaperonin GroES (94 aa).

Belongs to the GroES chaperonin family. Heptamer of 7 subunits arranged in a ring. Interacts with the chaperonin GroEL.

It localises to the cytoplasm. Together with the chaperonin GroEL, plays an essential role in assisting protein folding. The GroEL-GroES system forms a nano-cage that allows encapsulation of the non-native substrate proteins and provides a physical environment optimized to promote and accelerate protein folding. GroES binds to the apical surface of the GroEL ring, thereby capping the opening of the GroEL channel. This Clostridium perfringens (strain ATCC 13124 / DSM 756 / JCM 1290 / NCIMB 6125 / NCTC 8237 / Type A) protein is Co-chaperonin GroES.